Reading from the N-terminus, the 512-residue chain is Maturase K (512 aa).

This sequence belongs to the intron maturase 2 family. MatK subfamily.

The protein resides in the plastid. Its subcellular location is the chloroplast. In terms of biological role, usually encoded in the trnK tRNA gene intron. Probably assists in splicing its own and other chloroplast group II introns. This is Maturase K from Lemna minor (Common duckweed).